The primary structure comprises 442 residues: Chromosomal replication initiator protein DnaA (442 aa).

Residues methionine 1–glycine 68 are domain I, interacts with DnaA modulators. The domain II stretch occupies residues glycine 68 to glycine 104. The tract at residues asparagine 105–alanine 322 is domain III, AAA+ region. The ATP site is built by glycine 150, glycine 152, lysine 153, and threonine 154. The domain IV, binds dsDNA stretch occupies residues asparagine 323 to glutamate 442.

This sequence belongs to the DnaA family. Oligomerizes as a right-handed, spiral filament on DNA at oriC.

It localises to the cytoplasm. Functionally, plays an essential role in the initiation and regulation of chromosomal replication. ATP-DnaA binds to the origin of replication (oriC) to initiate formation of the DNA replication initiation complex once per cell cycle. Binds the DnaA box (a 9 base pair repeat at the origin) and separates the double-stranded (ds)DNA. Forms a right-handed helical filament on oriC DNA; dsDNA binds to the exterior of the filament while single-stranded (ss)DNA is stabiized in the filament's interior. The ATP-DnaA-oriC complex binds and stabilizes one strand of the AT-rich DNA unwinding element (DUE), permitting loading of DNA polymerase. After initiation quickly degrades to an ADP-DnaA complex that is not apt for DNA replication. Binds acidic phospholipids. In Xanthomonas axonopodis pv. citri (strain 306), this protein is Chromosomal replication initiator protein DnaA.